Reading from the N-terminus, the 100-residue chain is Urease subunit gamma (100 aa).

The protein belongs to the urease gamma subunit family. Heterotrimer of UreA (gamma), UreB (beta) and UreC (alpha) subunits. Three heterotrimers associate to form the active enzyme.

The protein resides in the cytoplasm. The catalysed reaction is urea + 2 H2O + H(+) = hydrogencarbonate + 2 NH4(+). Its pathway is nitrogen metabolism; urea degradation; CO(2) and NH(3) from urea (urease route): step 1/1. This chain is Urease subunit gamma, found in Pseudomonas syringae pv. tomato (strain ATCC BAA-871 / DC3000).